A 269-amino-acid polypeptide reads, in one-letter code: Bifunctional protein FolD (269 aa).

NADP(+) is bound by residues 149–151 (GLG) and V215.

It belongs to the tetrahydrofolate dehydrogenase/cyclohydrolase family. Homodimer.

It catalyses the reaction (6R)-5,10-methylene-5,6,7,8-tetrahydrofolate + NADP(+) = (6R)-5,10-methenyltetrahydrofolate + NADPH. The catalysed reaction is (6R)-5,10-methenyltetrahydrofolate + H2O = (6R)-10-formyltetrahydrofolate + H(+). The protein operates within one-carbon metabolism; tetrahydrofolate interconversion. In terms of biological role, catalyzes the oxidation of 5,10-methylenetetrahydrofolate to 5,10-methenyltetrahydrofolate and then the hydrolysis of 5,10-methenyltetrahydrofolate to 10-formyltetrahydrofolate. In Mycoplasma pneumoniae (strain ATCC 29342 / M129 / Subtype 1) (Mycoplasmoides pneumoniae), this protein is Bifunctional protein FolD.